The chain runs to 468 residues: Glutamine synthetase (468 aa).

A GS beta-grasp domain is found at 13-97 (NEVKFVDLRF…IRCDILEPAT (85 aa)). A GS catalytic domain is found at 105–468 (PRSIAKRAED…PVEFELYYSV (364 aa)). Mg(2+)-binding residues include glutamate 130 and glutamate 132. Glutamate 208 contacts ATP. Residues glutamate 213 and glutamate 220 each coordinate Mg(2+). L-glutamate contacts are provided by residues 264–265 (NG) and glycine 265. Histidine 269 is a binding site for Mg(2+). ATP contacts are provided by residues 271–273 (HQS) and serine 273. Residues arginine 321, glutamate 327, and arginine 339 each contribute to the L-glutamate site. 3 residues coordinate ATP: arginine 339, arginine 344, and lysine 352. A Mg(2+)-binding site is contributed by glutamate 357. Arginine 359 contributes to the L-glutamate binding site. Tyrosine 397 is modified (O-AMP-tyrosine).

This sequence belongs to the glutamine synthetase family. As to quaternary structure, oligomer of 12 subunits arranged in the form of two hexameric ring. Mg(2+) is required as a cofactor.

It is found in the cytoplasm. It carries out the reaction L-glutamate + NH4(+) + ATP = L-glutamine + ADP + phosphate + H(+). With respect to regulation, the activity of this enzyme could be controlled by adenylation under conditions of abundant glutamine. Functionally, catalyzes the ATP-dependent biosynthesis of glutamine from glutamate and ammonia. This is Glutamine synthetase from Vibrio alginolyticus.